A 120-amino-acid chain; its full sequence is HTH-type transcriptional regulator NmtR (120 aa).

Positions 15–109 (LDSQAAAQVA…EAIYHSEHLH (95 aa)) constitute an HTH arsR-type domain. The segment at residues 49-72 (VTDLAEAIGMEQSAVSHQLRVLRN) is a DNA-binding region (H-T-H motif). Residues aspartate 91, histidine 93, histidine 104, and histidine 107 each coordinate Ni(2+).

As to quaternary structure, homodimer.

With respect to regulation, binding to DNA is inhibited by nickel and, to some extent, cobalt ions. Its function is as follows. Represses transcription of ctpJ/nmtA, by binding to its promoter region. The sequence is that of HTH-type transcriptional regulator NmtR (nmtR) from Mycobacterium tuberculosis (strain ATCC 25618 / H37Rv).